The primary structure comprises 293 residues: MWNVIISFSMGLVLGNVIPGESCFHLMIKKTLFEQVVLIFLFSGGLLLTYRRVNLFNYCPFNDLKIITLSLLVLQITDEFFLVICSFLFFSEIRLRAIVCRCMLIFPTHSMASYFGTLIAIVLKISDLVHYRLLVTVFLITPYVTSYKFLVNSHQFAMCLQRYKPIYKPNGPYQMAIKDVIVYLLQFLTLTLLVWFGKLYLPRKSCQHLFFLAVLHSNLFITKLYQLVLCSILCLLAGVITEHCFFSLLFEFFLGLGYSALFAQISKTVGRKDIFTGDLLNLFYCSACFVIFF.

A run of 9 helical transmembrane segments spans residues 4–24, 30–50, 71–91, 103–123, 133–153, 180–200, 220–240, 245–265, and 273–293; these read VIIS…ESCF, KTLF…LLTY, LLVL…LFFS, MLIF…AIVL, LLVT…LVNS, VIVY…GKLY, FITK…AGVI, FFSL…FAQI, and DIFT…VIFF.

Its subcellular location is the membrane. The protein is Protein U26 (U26) of Human herpesvirus 7 (strain JI) (HHV-7).